The sequence spans 796 residues: Transcription factor kayak (796 aa).

4 disordered regions span residues 109 to 132 (AYQQQQSKQSYNNNNNSNSNSNTS), 315 to 341 (VVNNNNNNNNNNNNNSSNNNNNNSNTV), 374 to 429 (FNCG…GSNG), and 442 to 490 (VGSA…RNKL). The span at 402 to 429 (TTDTSSAATDSTSYQNGGHMFGNNGSNG) shows a compositional bias: low complexity. Polar residues predominate over residues 447 to 457 (RGTSSTSNNAT). The region spanning 478–541 (EEKRRVRRER…HQLNFVLEAH (64 aa)) is the bZIP domain. The interval 480–499 (KRRVRRERNKLAAARCRKRR) is basic motif. A leucine-zipper region spans residues 506–534 (LSEEVDGLLKKNEDLKKEIEILTNTRHQL). Positions 569–601 (SSGSNGSHHHNSNSNNSNNNNSNNNNNSNSNDS) are disordered. S621 carries the post-translational modification Phosphoserine. 2 disordered regions span residues 642–661 (PHDAGLDSSSSLDQDGPPAA) and 774–796 (SSQNKHPLELPTPTSEPSKLVSL).

The protein belongs to the bZIP family. Fos subfamily. As to quaternary structure, homodimer. Heterodimer with Jra. The kay-Jra heterodimer binds more stably to the AP-1 site than either of the two proteins alone.

It localises to the nucleus. Developmentally regulated transcription factor AP-1 binds and recognizes the enhancer DNA sequence: 5'-TGA[CG]TCA-3'. May play a role in the function or determination of a particular subset of cells in the developing embryo. It is able to carry out its function either independently of or in conjunction with Jra. The chain is Transcription factor kayak from Drosophila grimshawi (Hawaiian fruit fly).